A 48-amino-acid chain; its full sequence is uncharacterized protein (48 aa).

A disordered region spans residues 1 to 48; that stretch reads MTKIPINIPATSGKIKFGITPSSNKSPSLSPSPSNGQLGGGRGYILEP. The span at 21–36 shows a compositional bias: low complexity; sequence PSSNKSPSLSPSPSNG. Gly residues predominate over residues 37–48; the sequence is QLGGGRGYILEP.

This is an uncharacterized protein from Dictyostelium discoideum (Social amoeba).